Reading from the N-terminus, the 145-residue chain is Ribonuclease HI (145 aa).

The RNase H type-1 domain maps to 1-142 (MNQTVYLYTD…ADDLANRGAA (142 aa)). Residues Asp-10, Glu-48, Asp-70, and Asp-134 each contribute to the Mg(2+) site.

It belongs to the RNase H family. Monomer. Mg(2+) is required as a cofactor.

It localises to the cytoplasm. It carries out the reaction Endonucleolytic cleavage to 5'-phosphomonoester.. Functionally, endonuclease that specifically degrades the RNA of RNA-DNA hybrids. The protein is Ribonuclease HI of Neisseria meningitidis serogroup B (strain ATCC BAA-335 / MC58).